Reading from the N-terminus, the 282-residue chain is B3 domain-containing protein At5g06250 (282 aa).

Positions 46–159 (FEKSLTPSDV…RLFIGWRRRG (114 aa)) form a DNA-binding region, TF-B3.

It localises to the nucleus. This Arabidopsis thaliana (Mouse-ear cress) protein is B3 domain-containing protein At5g06250.